A 542-amino-acid chain; its full sequence is Chaperonin GroEL (542 aa).

ATP-binding positions include 29–32 (TLGP), 86–90 (DGTTT), Gly-413, 476–478 (NAA), and Asp-492.

The protein belongs to the chaperonin (HSP60) family. Forms a cylinder of 14 subunits composed of two heptameric rings stacked back-to-back. Interacts with the co-chaperonin GroES.

Its subcellular location is the cytoplasm. It carries out the reaction ATP + H2O + a folded polypeptide = ADP + phosphate + an unfolded polypeptide.. Its function is as follows. Together with its co-chaperonin GroES, plays an essential role in assisting protein folding. The GroEL-GroES system forms a nano-cage that allows encapsulation of the non-native substrate proteins and provides a physical environment optimized to promote and accelerate protein folding. The protein is Chaperonin GroEL of Lactococcus lactis subsp. cremoris (strain SK11).